Consider the following 922-residue polypeptide: Phosphoenolpyruvate carboxylase (922 aa).

The segment at Met-1–Pro-20 is disordered. Residues His-142 and Lys-581 contribute to the active site.

It belongs to the PEPCase type 1 family. Mg(2+) serves as cofactor.

It catalyses the reaction oxaloacetate + phosphate = phosphoenolpyruvate + hydrogencarbonate. Functionally, forms oxaloacetate, a four-carbon dicarboxylic acid source for the tricarboxylic acid cycle. This is Phosphoenolpyruvate carboxylase (ppc) from Methylorubrum extorquens (strain ATCC 14718 / DSM 1338 / JCM 2805 / NCIMB 9133 / AM1) (Methylobacterium extorquens).